A 552-amino-acid chain; its full sequence is Probable ABC transporter ATP-binding/permease protein HI_0664 (552 aa).

The next 6 membrane-spanning stretches (helical) occupy residues 22–42 (IMAF…FIMV), 52–72 (LNFD…VLAV), 139–159 (IAPI…FAQL), 162–182 (WFVL…PIIT), 253–273 (EVAV…LFSL), and 278–298 (FAAF…VIAL). The 285-residue stretch at 23 to 307 (MAFTITMGTL…LSNLSSNLLQ (285 aa)) folds into the ABC transmembrane type-1 domain. The region spanning 340–552 (IDVENVNFAY…VIGIENGRMS (213 aa)) is the ABC transporter domain. Residue 372 to 379 (GRSGSGKS) coordinates ATP.

It belongs to the ABC transporter superfamily. Lipid exporter (TC 3.A.1.106) family.

It localises to the cell inner membrane. This chain is Probable ABC transporter ATP-binding/permease protein HI_0664, found in Haemophilus influenzae (strain ATCC 51907 / DSM 11121 / KW20 / Rd).